A 537-amino-acid polypeptide reads, in one-letter code: 5,6-dihydroxyindole-2-carboxylic acid oxidase (537 aa).

The signal sequence occupies residues 1–24 (MSAPKLLSLGCIFFPLLLFQQARA). The Lumenal, melanosome segment spans residues 25 to 477 (QFPRQCATVE…WPSREFSVPE (453 aa)). 5 disulfides stabilise this stretch: C30–C41, C42–C65, C56–C99, C101–C110, and C113–C122. N-linked (GlcNAc...) asparagine glycosylation is found at N96 and N104. The N-linked (GlcNAc...) asparagine glycan is linked to N181. H192, H215, and H224 together coordinate Zn(2+). 2 cysteine pairs are disulfide-bonded: C258/C261 and C290/C303. N-linked (GlcNAc...) asparagine glycans are attached at residues N304 and N350. Positions 377 and 381 each coordinate Zn(2+). N385 carries N-linked (GlcNAc...) asparagine glycosylation. H404 is a Zn(2+) binding site. Residues 478–501 (IIAIAVVGALLLVALIFGTASYLI) form a helical membrane-spanning segment. Over 502–537 (RARRSMDEANQPLLTDQYQCYAEEYEKLQNPNQSVV) the chain is Cytoplasmic.

The protein belongs to the tyrosinase family. In terms of assembly, monomer. Interacts with ATP7A. Interacts with SLC45A2. Requires Cu(2+) as cofactor. It depends on Zn(2+) as a cofactor. In terms of processing, glycosylated. Pigment cells.

It localises to the melanosome membrane. The enzyme catalyses 2 5,6-dihydroxyindole-2-carboxylate + O2 = 2 indole-5,6-quinone-2-carboxylate + 2 H2O. It participates in pigment biosynthesis; melanin biosynthesis. Its activity is regulated as follows. The activity depends critically on the nature of the bound metal ion. Catalyzes the oxidation of 5,6-dihydroxyindole-2-carboxylic acid (DHICA) in the presence of bound Cu(2+) ions, but lacks activity in the presence of bound Zn(2+) ions. In terms of biological role, plays a role in melanin biosynthesis. Catalyzes the oxidation of 5,6-dihydroxyindole-2-carboxylic acid (DHICA) into indole-5,6-quinone-2-carboxylic acid in the presence of bound Cu(2+) ions, but not in the presence of Zn(2+). May regulate or influence the type of melanin synthesized. Also to a lower extent, capable of hydroxylating tyrosine and producing melanin. This Homo sapiens (Human) protein is 5,6-dihydroxyindole-2-carboxylic acid oxidase.